We begin with the raw amino-acid sequence, 157 residues long: Heat shock protein beta-9 (157 aa).

Residues 1-17 are compositionally biased toward low complexity; the sequence is MQRVGSSLPSGSQSASQ. Disordered regions lie at residues 1-20 and 136-157; these read MQRV…QCPS and PPSE…KKLA. Residues 35 to 148 enclose the sHSP domain; it reads QRLTEDAAAV…EAQTGPASRF (114 aa). Residues 148–157 show a composition bias toward basic residues; sequence FRSRGSKKLA.

It belongs to the small heat shock protein (HSP20) family.

It is found in the cytoplasm. The protein localises to the nucleus. The protein is Heat shock protein beta-9 (HSPB9) of Bos taurus (Bovine).